A 635-amino-acid chain; its full sequence is Threonine--tRNA ligase (635 aa).

The TGS domain maps to 1-61; the sequence is MVSIRLPDGS…DHDVALAIVT (61 aa). The interval 242-533 is catalytic; it reads DHRKLGKQLD…LIEHHAGAMP (292 aa). Zn(2+) contacts are provided by cysteine 333, histidine 384, and histidine 510.

This sequence belongs to the class-II aminoacyl-tRNA synthetase family. In terms of assembly, homodimer. It depends on Zn(2+) as a cofactor.

The protein localises to the cytoplasm. The catalysed reaction is tRNA(Thr) + L-threonine + ATP = L-threonyl-tRNA(Thr) + AMP + diphosphate + H(+). In terms of biological role, catalyzes the attachment of threonine to tRNA(Thr) in a two-step reaction: L-threonine is first activated by ATP to form Thr-AMP and then transferred to the acceptor end of tRNA(Thr). Also edits incorrectly charged L-seryl-tRNA(Thr). This chain is Threonine--tRNA ligase, found in Paraburkholderia xenovorans (strain LB400).